A 521-amino-acid chain; its full sequence is Glutamate--cysteine ligase (521 aa).

This sequence belongs to the glutamate--cysteine ligase type 1 family. Type 1 subfamily.

It carries out the reaction L-cysteine + L-glutamate + ATP = gamma-L-glutamyl-L-cysteine + ADP + phosphate + H(+). It participates in sulfur metabolism; glutathione biosynthesis; glutathione from L-cysteine and L-glutamate: step 1/2. This is Glutamate--cysteine ligase from Aliivibrio salmonicida (strain LFI1238) (Vibrio salmonicida (strain LFI1238)).